Reading from the N-terminus, the 465-residue chain is Iron-sulfur cluster assembly SufBD family protein SSP1857 (465 aa).

Belongs to the iron-sulfur cluster assembly SufBD family.

In Staphylococcus saprophyticus subsp. saprophyticus (strain ATCC 15305 / DSM 20229 / NCIMB 8711 / NCTC 7292 / S-41), this protein is Iron-sulfur cluster assembly SufBD family protein SSP1857.